Here is a 233-residue protein sequence, read N- to C-terminus: uncharacterized protein (233 aa).

7 N-linked (GlcNAc...) asparagine; by host glycosylation sites follow: asparagine 58, asparagine 77, asparagine 93, asparagine 102, asparagine 110, asparagine 120, and asparagine 155. Positions 102–124 (NSSTTTTTNASSSDSSMYNTTRS) are enriched in low complexity. The tract at residues 102 to 132 (NSSTTTTTNASSSDSSMYNTTRSTQRRVTYD) is disordered. A helical transmembrane segment spans residues 168–188 (FSLLQWVLVAALAFFMYYFLW).

Belongs to the ascovirus HvAv ORF58 family.

It is found in the membrane. This is an uncharacterized protein from Trichoplusia ni ascovirus 2c (TnAV-2c).